We begin with the raw amino-acid sequence, 415 residues long: tRNA(Met) cytidine acetate ligase (415 aa).

ATP contacts are provided by residues 7–20, G101, N162, and 187–188; these read VVEY…HRYH and RI.

Belongs to the TmcAL family.

Its subcellular location is the cytoplasm. It carries out the reaction cytidine(34) in elongator tRNA(Met) + acetate + ATP = N(4)-acetylcytidine(34) in elongator tRNA(Met) + AMP + diphosphate. Functionally, catalyzes the formation of N(4)-acetylcytidine (ac(4)C) at the wobble position of elongator tRNA(Met), using acetate and ATP as substrates. First activates an acetate ion to form acetyladenylate (Ac-AMP) and then transfers the acetyl group to tRNA to form ac(4)C34. This chain is tRNA(Met) cytidine acetate ligase, found in Bacillus velezensis (strain DSM 23117 / BGSC 10A6 / LMG 26770 / FZB42) (Bacillus amyloliquefaciens subsp. plantarum).